Here is an 803-residue protein sequence, read N- to C-terminus: Subtilisin-like protease SBT5.5 (803 aa).

Residues 1–22 (MKRIFGIFIFLSLLLFLVPLLA) form the signal peptide. The propeptide at 23 to 112 (SCTKEKQVYI…KSDPRKYKIH (90 aa)) is activation peptide. Residues 30-108 (VYIVYFGEHK…VSVFKSDPRK (79 aa)) enclose the Inhibitor I9 domain. Residues 140–656 (KYDVNDRFRV…SRHFRPTKAA (517 aa)) form the Peptidase S8 domain. Asp-169 (charge relay system) is an active-site residue. Asn-202 carries an N-linked (GlcNAc...) asparagine glycan. His-244 (charge relay system) is an active-site residue. In terms of domain architecture, PA spans 409 to 504 (YAPLVYAPDV…VFSSTVDRIL (96 aa)). Ser-589 serves as the catalytic Charge relay system. Asn-725 is a glycosylation site (N-linked (GlcNAc...) asparagine).

Belongs to the peptidase S8 family.

The protein resides in the secreted. This Arabidopsis thaliana (Mouse-ear cress) protein is Subtilisin-like protease SBT5.5.